The primary structure comprises 465 residues: Sodium-coupled neutral amino acid transporter 7 (465 aa).

Helical transmembrane passes span 54-74 (AVFI…PAAF), 82-102 (AGVT…VILA), 128-148 (ICEL…LIII), 177-197 (FTIT…KEIG), 204-224 (TLSV…YIWP), 244-264 (FNAM…VPVF), 275-295 (WWGV…GTGV), 318-338 (VAVA…YPIL), 370-390 (ILQT…IPDI), 394-414 (ISLI…LCLI), and 427-447 (SWNA…FIFG).

Belongs to the amino acid/polyamine transporter 2 family.

The protein resides in the lysosome membrane. It localises to the cell projection. It is found in the axon. The catalysed reaction is L-asparagine(in) + Na(+)(in) = L-asparagine(out) + Na(+)(out). It catalyses the reaction L-glutamine(in) + Na(+)(in) = L-glutamine(out) + Na(+)(out). Functionally, symporter that selectively cotransports sodium ions and amino acids, such as L-glutamine and L-asparagine from the lysosome into the cytoplasm and may participates in mTORC1 activation. The transport activity requires an acidic lysosomal lumen. The polypeptide is Sodium-coupled neutral amino acid transporter 7 (Danio rerio (Zebrafish)).